Here is a 265-residue protein sequence, read N- to C-terminus: Thiazole synthase (265 aa).

The active-site Schiff-base intermediate with DXP is lysine 107. Residues glycine 168, 194–195, and 216–217 contribute to the 1-deoxy-D-xylulose 5-phosphate site; these read AG and NT.

Belongs to the ThiG family. In terms of assembly, homotetramer. Forms heterodimers with either ThiH or ThiS.

It localises to the cytoplasm. It carries out the reaction [ThiS sulfur-carrier protein]-C-terminal-Gly-aminoethanethioate + 2-iminoacetate + 1-deoxy-D-xylulose 5-phosphate = [ThiS sulfur-carrier protein]-C-terminal Gly-Gly + 2-[(2R,5Z)-2-carboxy-4-methylthiazol-5(2H)-ylidene]ethyl phosphate + 2 H2O + H(+). It functions in the pathway cofactor biosynthesis; thiamine diphosphate biosynthesis. In terms of biological role, catalyzes the rearrangement of 1-deoxy-D-xylulose 5-phosphate (DXP) to produce the thiazole phosphate moiety of thiamine. Sulfur is provided by the thiocarboxylate moiety of the carrier protein ThiS. In vitro, sulfur can be provided by H(2)S. The chain is Thiazole synthase from Pseudomonas aeruginosa (strain LESB58).